The sequence spans 266 residues: Hydroxyethylthiazole kinase (266 aa).

M46 is a substrate binding site. Positions 122 and 166 each coordinate ATP. G193 is a substrate binding site.

This sequence belongs to the Thz kinase family. Mg(2+) serves as cofactor.

It catalyses the reaction 5-(2-hydroxyethyl)-4-methylthiazole + ATP = 4-methyl-5-(2-phosphooxyethyl)-thiazole + ADP + H(+). It functions in the pathway cofactor biosynthesis; thiamine diphosphate biosynthesis; 4-methyl-5-(2-phosphoethyl)-thiazole from 5-(2-hydroxyethyl)-4-methylthiazole: step 1/1. In terms of biological role, catalyzes the phosphorylation of the hydroxyl group of 4-methyl-5-beta-hydroxyethylthiazole (THZ). This chain is Hydroxyethylthiazole kinase, found in Caldivirga maquilingensis (strain ATCC 700844 / DSM 13496 / JCM 10307 / IC-167).